A 237-amino-acid polypeptide reads, in one-letter code: 4-hydroxy-tetrahydrodipicolinate reductase (237 aa).

NAD(+)-binding positions include 11–16, 92–94, and 116–119; these read GASGRM, GTT, and GSNF. The active-site Proton donor/acceptor is His-148. His-149 contributes to the (S)-2,3,4,5-tetrahydrodipicolinate binding site. Lys-152 functions as the Proton donor in the catalytic mechanism. 158–159 lines the (S)-2,3,4,5-tetrahydrodipicolinate pocket; it reads GS.

Belongs to the DapB family.

It localises to the cytoplasm. It catalyses the reaction (S)-2,3,4,5-tetrahydrodipicolinate + NAD(+) + H2O = (2S,4S)-4-hydroxy-2,3,4,5-tetrahydrodipicolinate + NADH + H(+). It carries out the reaction (S)-2,3,4,5-tetrahydrodipicolinate + NADP(+) + H2O = (2S,4S)-4-hydroxy-2,3,4,5-tetrahydrodipicolinate + NADPH + H(+). It participates in amino-acid biosynthesis; L-lysine biosynthesis via DAP pathway; (S)-tetrahydrodipicolinate from L-aspartate: step 4/4. Functionally, catalyzes the conversion of 4-hydroxy-tetrahydrodipicolinate (HTPA) to tetrahydrodipicolinate. The chain is 4-hydroxy-tetrahydrodipicolinate reductase from Xylella fastidiosa (strain 9a5c).